An 89-amino-acid chain; its full sequence is Small ribosomal subunit protein uS14 (89 aa).

Belongs to the universal ribosomal protein uS14 family. Part of the 30S ribosomal subunit. Contacts proteins S3 and S10.

Its function is as follows. Binds 16S rRNA, required for the assembly of 30S particles and may also be responsible for determining the conformation of the 16S rRNA at the A site. This is Small ribosomal subunit protein uS14 from Leuconostoc mesenteroides subsp. mesenteroides (strain ATCC 8293 / DSM 20343 / BCRC 11652 / CCM 1803 / JCM 6124 / NCDO 523 / NBRC 100496 / NCIMB 8023 / NCTC 12954 / NRRL B-1118 / 37Y).